The following is a 207-amino-acid chain: Small ribosomal subunit protein uS4c (207 aa).

The 62-residue stretch at 92-153 folds into the S4 RNA-binding domain; sequence MRLDNILFRL…PKTYQSILSK (62 aa).

It belongs to the universal ribosomal protein uS4 family. Part of the 30S ribosomal subunit. Contacts protein S5. The interaction surface between S4 and S5 is involved in control of translational fidelity.

It is found in the plastid. The protein resides in the chloroplast. Its function is as follows. One of the primary rRNA binding proteins, it binds directly to 16S rRNA where it nucleates assembly of the body of the 30S subunit. In terms of biological role, with S5 and S12 plays an important role in translational accuracy. This Equisetum laevigatum (Smooth horsetail) protein is Small ribosomal subunit protein uS4c (rps4).